The sequence spans 395 residues: Protochlorophyllide reductase B, chloroplastic (395 aa).

Residues 1 to 59 constitute a chloroplast transit peptide; it reads MALQAATSFLPSALSARKEGAAKDSAFFGVRLADGLKLDATSLGLRTKRVNTSSVAIRA.

It belongs to the short-chain dehydrogenases/reductases (SDR) family. POR subfamily.

The protein localises to the plastid. It is found in the chloroplast. It carries out the reaction chlorophyllide a + NADP(+) = protochlorophyllide a + NADPH + H(+). It functions in the pathway porphyrin-containing compound metabolism; chlorophyll biosynthesis. In terms of biological role, phototransformation of protochlorophyllide (Pchlide) to chlorophyllide (Chlide). The sequence is that of Protochlorophyllide reductase B, chloroplastic (PORB) from Hordeum vulgare (Barley).